The sequence spans 270 residues: Expansin-B10 (270 aa).

The first 31 residues, 1–31, serve as a signal peptide directing secretion; it reads MAVNVRTMWSSMRAQVAMVVALVFLVRGAWC. The N-linked (GlcNAc...) asparagine glycan is linked to Asn-41. In terms of domain architecture, Expansin-like EG45 spans 70–176; sequence GGGCGYKDVN…RRVKCKYDSK (107 aa). Disulfide bonds link Cys-73–Cys-101, Cys-104–Cys-171, and Cys-109–Cys-115. Residues 188–269 form the Expansin-like CBD domain; that stretch reads NYLALLVKYV…NWKANTAYTA (82 aa).

It belongs to the expansin family. Expansin B subfamily. In terms of tissue distribution, expressed in pollen.

The protein resides in the secreted. Its subcellular location is the cell wall. It is found in the membrane. Functionally, may aid fertilization by loosening the cell wall of the stigma and style, thereby facilitating penetration of the pollen tube. Acts selectively on grass cell walls, which are relatively poor in pectins and xyloglucans and rich in glucuronoarabinoxylans and (1-3),(1-4)-beta-D-glucans, when compared with cell walls of other angiosperms, including other monocots. The chain is Expansin-B10 (EXPB10) from Zea mays (Maize).